The chain runs to 448 residues: Tryptophan dimethylallyltransferase 2 (448 aa).

L-tryptophan contacts are provided by residues 80-81 and glutamate 89; that span reads IL. Residues arginine 100, lysine 186, and tyrosine 188 each coordinate substrate. The L-tryptophan site is built by tyrosine 190 and arginine 249. Positions 262, 264, 266, 348, 350, 414, and 418 each coordinate substrate.

It belongs to the tryptophan dimethylallyltransferase family. Homodimer.

The catalysed reaction is L-tryptophan + dimethylallyl diphosphate = 4-(3-methylbut-2-enyl)-L-tryptophan + diphosphate. Its pathway is alkaloid biosynthesis; ergot alkaloid biosynthesis. Its function is as follows. Catalyzes the first step of ergot alkaloid biosynthesis. Ergot alkaloids, which are produced by endophyte fungi, can enhance plant host fitness, but also cause livestock toxicosis to host plants. The sequence is that of Tryptophan dimethylallyltransferase 2 (dmaW2) from Claviceps purpurea (strain 20.1) (Ergot fungus).